The sequence spans 1277 residues: NPC intracellular cholesterol transporter 1 (1277 aa).

Positions 1–22 (MGAHHPALGLLLLLLCPAQVFS) are cleaved as a signal peptide. Over 23 to 269 (QSCVWYGECG…WRIWGLDAMY (247 aa)) the chain is Lumenal. 9 disulfide bridges follow: C25-C74, C31-C42, C63-C109, C75-C113, C97-C238, C100-C160, C177-C184, C227-C243, and C240-C247. N41 provides a ligand contact to cholesterol. N70 is a glycosylation site (N-linked (GlcNAc...) asparagine). Q79 provides a ligand contact to cholesterol. 2 N-linked (GlcNAc...) asparagine glycosylation sites follow: N122 and N137. The interval 175-205 (LLCGRDARACNATNWIEYMFNKDNGQAPFTI) is important for cholesterol binding and cholesterol transfer from NPC1 to liposomes. Residues N185, N222, and N228 are each glycosylated (N-linked (GlcNAc...) asparagine). A helical membrane pass occupies residues 270–290 (VIMWVTYVAFLFVFFGALLAV). Over 291-350 (WCHRRRYFVSEYTPIDSNIAFSVNSSDKGEASCCDPLGAAFDDCLRRMFTKWGAFCVRNP) the chain is Cytoplasmic. The helical transmembrane segment at 351 to 371 (TCIIFFSLAFITVCSSGLVFV) threads the bilayer. Over 372–621 (QVTTNPVELW…ELNRESNSDV (250 aa)) the chain is Lumenal. 4 N-linked (GlcNAc...) asparagine glycosylation sites follow: N414, N459, N478, and N524. Intrachain disulfides connect C468–C479 and C516–C533. Residues 620-785 (DVFTVIISYV…ITCFVSLLGL (166 aa)) form the SSD domain. Residues 622–642 (FTVIISYVVMFLYISLALGHI) traverse the membrane as a helical segment. Residues 643 to 653 (QSCSRLLVDSK) are Cytoplasmic-facing. Residues 654 to 674 (ISLGIAGILIVLSSVACSLGI) traverse the membrane as a helical segment. The Lumenal segment spans residues 675–683 (FSYMGMPLT). Residues 684-704 (LIVIEVIPFLVLAVGVDNIFI) traverse the membrane as a helical segment. Topologically, residues 705–730 (LVQTYQRDERLQEETLDQQLGRILGE) are cytoplasmic. Residues 731–751 (VAPTMFLSSFSETSAFFFGAL) form a helical membrane-spanning segment. Over 752–759 (SSMPAVHT) the chain is Lumenal. A helical transmembrane segment spans residues 760 to 780 (FSLFAGMAVLIDFLLQITCFV). The Cytoplasmic segment spans residues 781 to 832 (SLLGLDIKRQEKNHLDILCCVRGADDGQGSHASESYLFRFFKNYFAPLLLKD). The chain crosses the membrane as a helical span at residues 833–853 (WLRPIVVAVFVGVLSFSVAVV). Topologically, residues 854 to 1097 (NKVDIGLDQS…EQYLTIIDDT (244 aa)) are lumenal. N868 and N898 each carry an N-linked (GlcNAc...) asparagine glycan. C909 and C914 are joined by a disulfide. N-linked (GlcNAc...) asparagine glycans are attached at residues N916, N961, N968, and N1063. Cystine bridges form between C956–C1011, C957–C979, and C967–C976. Residues 1098-1118 (IFNLSVSLGSIFLVTLVVLGC) traverse the membrane as a helical segment. Topologically, residues 1119–1123 (ELWSA) are cytoplasmic. Residues 1124 to 1144 (VIMCITIAMILVNMFGVMWLW) form a helical membrane-spanning segment. Residue G1145 is a topological domain, lumenal. A helical membrane pass occupies residues 1146–1166 (ISLNAVSLVNLVMSCGISVEF). Over 1167 to 1194 (CSHITRAFTMSTKGSRVSRAEEALAHMG) the chain is Cytoplasmic. The helical transmembrane segment at 1195–1215 (SSVFSGITLTKFGGIVVLAFA) threads the bilayer. Over 1216–1226 (KSQIFEIFYFR) the chain is Lumenal. Residues 1227–1247 (MYLAMVLLGATHGLIFLPVLL) form a helical membrane-spanning segment. The Cytoplasmic segment spans residues 1248–1277 (SYIGPSVNKAKRHTTYERYRGTERERLLNF). The segment at 1274 to 1277 (LLNF) is required for location in lysosomes. A Di-leucine motif motif is present at residues 1274–1277 (LLNF).

It belongs to the patched family. As to quaternary structure, interacts (via the second lumenal domain) with NPC2. Interacts with TMEM97; the interaction may decrease NPC1 availability to the cell. Interacts with TIM1. Interacts with SLC38A9; this interaction inhibits cholesterol-mediated mTORC1 activation via its sterol transport activity. Post-translationally, N-glycosylated. As to expression, detected in liver (at protein level). Ubiquitous. Detected in adult heart, spleen, lung, liver, skeletal muscle, kidney, testis.

The protein resides in the late endosome membrane. Its subcellular location is the lysosome membrane. It carries out the reaction cholesterol(in) = cholesterol(out). Its function is as follows. Intracellular cholesterol transporter which acts in concert with NPC2 and plays an important role in the egress of cholesterol from the endosomal/lysosomal compartment. Unesterified cholesterol that has been released from LDLs in the lumen of the late endosomes/lysosomes is transferred by NPC2 to the cholesterol-binding pocket in the N-terminal domain of NPC1. Cholesterol binds to NPC1 with the hydroxyl group buried in the binding pocket. May play a role in vesicular trafficking in glia, a process that may be crucial for maintaining the structural and functional integrity of nerve terminals. Inhibits cholesterol-mediated mTORC1 activation throught its interaction with SLC38A9. This chain is NPC intracellular cholesterol transporter 1, found in Mus musculus (Mouse).